The sequence spans 142 residues: Putative transcriptional regulatory protein Mevan_1098 (142 aa).

It belongs to the Tfx family.

In terms of biological role, putative transcriptional regulator. The polypeptide is Putative transcriptional regulatory protein Mevan_1098 (Methanococcus vannielii (strain ATCC 35089 / DSM 1224 / JCM 13029 / OCM 148 / SB)).